Here is a 359-residue protein sequence, read N- to C-terminus: MLENRVKTKQIFIGGVAIGGDAPISTQSMTFSKTADIESTKNQIDRLKLAGADLVRVAVSNEKDALALKELKKVSPLPLIADIHFHYKFALIAAQSVDAIRINPGNIGSKDKIKAVVDACKEKNIPIRIGVNAGSLEKQFDQKYGPTPKGMVESALYNAKLLEDLDFTDFKISLKASDVMRTIEAYRMLRPLVIYPFHLGVTEAGNLFSSSIKSAMALGGLLMEGIGDTMRVSITGELENEIKVARAILRHSGRLKEGINWISCPTCGRIEANLVDMASKVEKRLSHIKTPLDISVMGCVVNALGEAKHADMAIAFGNRSGLIIKEGKVIHKLAEKDLFETFVIEVENLAKEREKSLKD.

Positions 264, 267, 299, and 306 each coordinate [4Fe-4S] cluster.

It belongs to the IspG family. Requires [4Fe-4S] cluster as cofactor.

It catalyses the reaction (2E)-4-hydroxy-3-methylbut-2-enyl diphosphate + oxidized [flavodoxin] + H2O + 2 H(+) = 2-C-methyl-D-erythritol 2,4-cyclic diphosphate + reduced [flavodoxin]. Its pathway is isoprenoid biosynthesis; isopentenyl diphosphate biosynthesis via DXP pathway; isopentenyl diphosphate from 1-deoxy-D-xylulose 5-phosphate: step 5/6. Converts 2C-methyl-D-erythritol 2,4-cyclodiphosphate (ME-2,4cPP) into 1-hydroxy-2-methyl-2-(E)-butenyl 4-diphosphate. This chain is 4-hydroxy-3-methylbut-2-en-1-yl diphosphate synthase (flavodoxin), found in Helicobacter pylori (strain HPAG1).